Here is a 923-residue protein sequence, read N- to C-terminus: Protein dct-6 (923 aa).

Residues aspartate 312–glutamine 347 are a coiled coil.

In terms of biological role, may have a role in tumor suppression. The sequence is that of Protein dct-6 (dct-6) from Caenorhabditis elegans.